We begin with the raw amino-acid sequence, 313 residues long: Ethylene-responsive transcription factor ERN2 (313 aa).

Basic and acidic residues predominate over residues 1-10 (MEIQFDEPKK). A disordered region spans residues 1-29 (MEIQFDEPKKSLRPKKVNKFKGRNKKSET). The segment covering 11–24 (SLRPKKVNKFKGRN) has biased composition (basic residues). Positions 32 to 89 (KFVGVRQRPSGRYVAEIKDTTQNIRMWLGTFETAEEAARAYDEAATLLRGSKTRTNFV) form a DNA-binding region, AP2/ERF. Disordered regions lie at residues 108–143 (NRKKGTKQQDMNGISSTTSHADTTNDTTSDGSTSST) and 157–204 (TSAS…SSST). Low complexity-rich tracts occupy residues 122 to 143 (SSTTSHADTTNDTTSDGSTSST) and 157 to 193 (TSASGVTSTSTNISTSASGVASTSTDISTNSSNTNVN).

The protein belongs to the AP2/ERF transcription factor family. ERF subfamily. In terms of tissue distribution, expressed in roots, root hairs and leaves. Expressed in root epidermis and root hairs.

It localises to the nucleus. In terms of biological role, transcription factor involved in symbiotic nodule signaling in response to rhizobial Nod factors (NFs). Binds to the GCC box (NF-responsive box) of ENOD11 promoter. Acts as a transcriptional activator of NF-responsive box-containing target gene promoters in root hairs. Involved in early stages of root nodule development. Functions redundantly with ERN1. Is essential with ERN1 for the initiation of root hair infection, and nodule organogenesis and development. Required for accurate expression of the NF signaling genes ENOD11 and ENOD12. The chain is Ethylene-responsive transcription factor ERN2 from Medicago truncatula (Barrel medic).